A 575-amino-acid polypeptide reads, in one-letter code: Arginine--tRNA ligase (575 aa).

Positions 131–141 (ANPTGPLHVGH) match the 'HIGH' region motif.

Belongs to the class-I aminoacyl-tRNA synthetase family. In terms of assembly, monomer.

Its subcellular location is the cytoplasm. The catalysed reaction is tRNA(Arg) + L-arginine + ATP = L-arginyl-tRNA(Arg) + AMP + diphosphate. The protein is Arginine--tRNA ligase of Jannaschia sp. (strain CCS1).